A 244-amino-acid polypeptide reads, in one-letter code: MEIVSMREMLKAGVHFGHQTRYWNPKMKPFIFGIRNRVHIINLEKTLPMFHFALSELKKIALKKGRILFVGTKKAASKGIKEVAINCEQFYVNHRWLGGMLTNWKTVRQSIKRLKDLEIESKDGTFSKLTKKEALIRSRELFKLENSLGGIKNMGGLPDCLFVIDAAHENIAITEANNLGIPVFSIVDTNSNPDGVDYIIPGNDDAIRSVNLYLKSIMLTISKINNQNSLDKVFIDTKNSTNIE.

This sequence belongs to the universal ribosomal protein uS2 family.

In Buchnera aphidicola subsp. Acyrthosiphon pisum (strain 5A), this protein is Small ribosomal subunit protein uS2.